A 198-amino-acid chain; its full sequence is Dual specificity protein phosphatase 1 (198 aa).

Residues 1 to 20 (MSSRDRGSPSSSSSSSSLPG) form a disordered region. A compositionally biased stretch (low complexity) spans 8 to 17 (SPSSSSSSSS). Residues 26–47 (EKVKNQIQALVRVIKVARTYRD) are caM binding domain 1. The region spanning 50-191 (VPSLIEQGLY…LQDLEKSMQV (142 aa)) is the Tyrosine-protein phosphatase domain. The active-site Phosphocysteine intermediate is the cysteine 135. The caM binding domain 2 stretch occupies residues 151 to 180 (MKKHGMTLAQALQHVKSKRPVASPNAGFIR).

Belongs to the protein-tyrosine phosphatase family. Non-receptor class dual specificity subfamily. As to quaternary structure, interacts with calmodulin (CaM) in a calcium Ca(2+)-dependent manner. Expressed in roots, stems, leaves and flowers.

The protein localises to the nucleus. It is found in the cytoplasm. It carries out the reaction O-phospho-L-tyrosyl-[protein] + H2O = L-tyrosyl-[protein] + phosphate. The catalysed reaction is O-phospho-L-seryl-[protein] + H2O = L-seryl-[protein] + phosphate. It catalyses the reaction O-phospho-L-threonyl-[protein] + H2O = L-threonyl-[protein] + phosphate. Its activity is regulated as follows. Inhibited by sodium vanadate and sodium tungstate. NaF and spermifine repress specifically phosphoserine and phosphothreonine phosphatase activity. In terms of biological role, has a dual specificity toward Ser/Thr and Tyr-containing proteins. Dephosphorylates MPK4 in vitro. The chain is Dual specificity protein phosphatase 1 (DSPTP1) from Arabidopsis thaliana (Mouse-ear cress).